Reading from the N-terminus, the 236-residue chain is MILLVSPKDVAEAYEAIEGGADIIDVKNPPEGSLGANFPWVIKEIREATPEGRLVSAAIGDVPYKPGTVTLAALGATVSGADYIKVGLYGTRSYQEAVDVMKNVTKAVKYVGEDKIVVAAGYADAYRIGGVDPLVIPKVARDAGCDVAMLDTAVKDGKTLFDHMSIELLKEFVEETHKYGMKCALAGSIKIEEIPMLKEIGCDIVGVRGAACTKGDRNEGRIQKDLVKEIVKVCKE.

K27 (schiff-base intermediate with substrate) is an active-site residue. The active-site Proton acceptor is the K85.

This sequence belongs to the MfnB family.

It carries out the reaction 2 D-glyceraldehyde 3-phosphate = 4-(hydroxymethyl)-2-furancarboxaldehyde phosphate + phosphate + 2 H2O. It participates in cofactor biosynthesis; methanofuran biosynthesis. Its function is as follows. Catalyzes the formation of 4-(hydroxymethyl)-2-furancarboxaldehyde phosphate (4-HFC-P) from two molecules of glyceraldehyde-3-P (GA-3-P). The sequence is that of (5-formylfuran-3-yl)methyl phosphate synthase from Methanococcus maripaludis (strain C5 / ATCC BAA-1333).